The sequence spans 1177 residues: DNA-directed RNA polymerase subunit beta' (1177 aa).

4 residues coordinate Zn(2+): C60, C62, C75, and C78. Mg(2+)-binding residues include D450, D452, and D454. Zn(2+) is bound by residues C795, C869, C876, and C879.

Belongs to the RNA polymerase beta' chain family. As to quaternary structure, the RNAP catalytic core consists of 2 alpha, 1 beta, 1 beta' and 1 omega subunit. When a sigma factor is associated with the core the holoenzyme is formed, which can initiate transcription. It depends on Mg(2+) as a cofactor. Requires Zn(2+) as cofactor.

The catalysed reaction is RNA(n) + a ribonucleoside 5'-triphosphate = RNA(n+1) + diphosphate. Functionally, DNA-dependent RNA polymerase catalyzes the transcription of DNA into RNA using the four ribonucleoside triphosphates as substrates. The polypeptide is DNA-directed RNA polymerase subunit beta' (Clostridium botulinum (strain Alaska E43 / Type E3)).